Reading from the N-terminus, the 130-residue chain is Small ribosomal subunit protein uS9 (130 aa).

Positions 99-130 (KRAGLLTRDPRMKERKKPGLKAARRSPQFSKR) are disordered. Residues 111–130 (KERKKPGLKAARRSPQFSKR) are compositionally biased toward basic residues.

This sequence belongs to the universal ribosomal protein uS9 family.

This chain is Small ribosomal subunit protein uS9, found in Staphylococcus aureus (strain Mu3 / ATCC 700698).